Reading from the N-terminus, the 281-residue chain is Elongation factor Ts (281 aa).

The interval 80–83 (TDFV) is involved in Mg(2+) ion dislocation from EF-Tu.

Belongs to the EF-Ts family.

The protein localises to the cytoplasm. Functionally, associates with the EF-Tu.GDP complex and induces the exchange of GDP to GTP. It remains bound to the aminoacyl-tRNA.EF-Tu.GTP complex up to the GTP hydrolysis stage on the ribosome. The chain is Elongation factor Ts from Vibrio parahaemolyticus serotype O3:K6 (strain RIMD 2210633).